Consider the following 61-residue polypeptide: [Val1,Thr6]-bradykinyl-Gln,Ser (61 aa).

The signal sequence occupies residues 1 to 22 (MSILKKSLFLVLFLGLVSFSIC). Positions 23 to 50 (EEEKREAEEEENEDEIEEQSEEKKRFEP) are excised as a propeptide. Residues 25–61 (EKREAEEEENEDEIEEQSEEKKRFEPVPPGFTPFRQS) form a disordered region. Acidic residues predominate over residues 30 to 42 (EEEENEDEIEEQS). The residue at position 52 (Pro-52) is a 4-hydroxyproline; in form [Val1,Hyp2,Thr6]-Bradykinyl-Gln,Ser and [Val1,Hyp2,Thr6]-Bradykinin.

The protein belongs to the frog skin active peptide (FSAP) family. Bradykinin-related peptide subfamily. As to expression, expressed by the skin glands.

It is found in the secreted. Functionally, induces contraction of rat ileum smooth muscle (EC(50)=2.73 uM) but has no activity towards smooth muscle from tail artery, urinary bladder or uterus up to concentrations of 100 uM. Binds to both bradykinin receptor B1 (BDKRB1) and B2 (BDKRB2); the effect via BDKRB1 is stronger. [Val1,Hyp2,Thr6]-bradykinin-Gln,Ser: Induces contraction of rat ileum smooth muscle (EC(50)=710 nM) but has no activity towards smooth muscle from tail artery, urinary bladder or uterus up to concentrations of 100 uM. Binds to both bradykinin receptor B1 (BDKRB1) and B2 (BDKRB2); the effect via BDKRB1 is stronger. Induces contraction of guinea pig ileum smooth muscle. This Pithecopus hypochondrialis (Orange-legged leaf frog) protein is [Val1,Thr6]-bradykinyl-Gln,Ser.